Reading from the N-terminus, the 242-residue chain is Terpene cyclase dpchB (242 aa).

The next 7 helical transmembrane spans lie at 16–36 (VVWI…ANYV), 51–71 (ALLP…MYAF), 78–95 (YVHF…YTAV), 114–134 (LIFV…AKQV), 141–161 (AWSA…QLLC), 169–189 (SYFL…QDII), and 207–227 (IWFV…LWYV).

The protein belongs to the paxB family.

It is found in the membrane. The protein operates within secondary metabolite biosynthesis; terpenoid biosynthesis. Terpene cyclase; part of the gene cluster that mediates the biosynthesis of the diterpenoid pyrones higginsianins A and B. The first step of the pathway is the synthesis of the alpha-pyrone moiety by the polyketide synthase dpchA via condensation of one acetyl-CoA starter unit with 3 malonyl-CoA units and 2 methylations. The alpha-pyrone is then combined with geranylgeranyl pyrophosphate (GGPP) formed by the GGPP synthase dpchD through the action of the prenyltransferase dpchC to yield a linear alpha-pyrone diterpenoid. Subsequent steps in the diterpenoid pyrone biosynthetic pathway involve the decalin core formation, which is initiated by the epoxidation of the C10-C11 olefin by the FAD-dependent oxidoreductase dpchE, and is followed by a cyclization cascade catalyzed by the terpene cyclase dpchB. The short chain dehydrogenase/reductase dpchG then oxidizes the 8S hydroxy group to a ketone and the short chain dehydrogenase/reductase dpchH reduces the ketone to the 8R hydroxy group to yield higginsianin B. Finally, the FAD-dependent oxidoreductase dpchF converts higginsianin B into higginsianin A. The protein is Terpene cyclase dpchB of Colletotrichum higginsianum (strain IMI 349063) (Crucifer anthracnose fungus).